The following is a 276-amino-acid chain: Mitochondrial outer membrane protein porin 1 (276 aa).

This sequence belongs to the eukaryotic mitochondrial porin (TC 1.B.8.1) family. In terms of tissue distribution, expressed in shoot meristems, root meristematic zone, lateral roots, leaves, stigma and anthers.

It is found in the mitochondrion outer membrane. In terms of biological role, forms a channel through the mitochondrial outer membrane that allows diffusion of small hydrophilic molecules. The channel adopts an open conformation at low or zero membrane potential and a closed conformation at potentials above 30-40 mV. The open state has a weak anion selectivity whereas the closed state is cation-selective. Involved in plant development at reproductive stage, is important for pollen development and may regulate hydrogen peroxide generation during disease resistance. In Arabidopsis thaliana (Mouse-ear cress), this protein is Mitochondrial outer membrane protein porin 1 (VDAC1).